The chain runs to 137 residues: 5-hydroxytryptamine receptor 4 (137 aa).

The chain crosses the membrane as a helical span at residues 12 to 35; the sequence is TPLRVAVLLAGCWAIPVLISFLPI. An N-linked (GlcNAc...) asparagine glycan is attached at asparagine 58. Residues 67-90 traverse the membrane as a helical segment; the sequence is NKPYAITCSVVAFYIPFLLMVLAY. The disordered stretch occupies residues 112–137; that stretch reads APAEGRPPSADQHSTHRMRTETKAAK.

It belongs to the G-protein coupled receptor 1 family. As to quaternary structure, interacts (via C-terminus 330-346 AA) with GRK5; this interaction is promoted by 5-HT (serotonin).

The protein resides in the cell membrane. The protein localises to the endosome membrane. Its function is as follows. G-protein coupled receptor for 5-hydroxytryptamine (serotonin), a biogenic hormone that functions as a neurotransmitter, a hormone and a mitogen. Ligand binding causes a conformation change that triggers signaling via guanine nucleotide-binding proteins (G proteins) and modulates the activity of downstream effectors. HTR4 is coupled to G(s) G alpha proteins and mediates activation of adenylate cyclase activity. The chain is 5-hydroxytryptamine receptor 4 (HTR4) from Sus scrofa (Pig).